The following is a 194-amino-acid chain: dCTP deaminase (194 aa).

DCTP is bound by residues 110–115 (RSSLAR), aspartate 128, 136–138 (VLE), tyrosine 171, lysine 178, and glutamine 182. Glutamate 138 functions as the Proton donor/acceptor in the catalytic mechanism.

This sequence belongs to the dCTP deaminase family. As to quaternary structure, homotrimer.

The catalysed reaction is dCTP + H2O + H(+) = dUTP + NH4(+). It functions in the pathway pyrimidine metabolism; dUMP biosynthesis; dUMP from dCTP (dUTP route): step 1/2. Catalyzes the deamination of dCTP to dUTP. The chain is dCTP deaminase from Histophilus somni (strain 2336) (Haemophilus somnus).